Here is a 390-residue protein sequence, read N- to C-terminus: Leucine aminopeptidase 1 (390 aa).

The signal sequence occupies residues 1–18 (MKLSTALVLGATATGAWS). Residues 19 to 90 (YAIPQLEQEV…FPTLDAGSYV (72 aa)) constitute a propeptide that is removed on maturation. A glycan (N-linked (GlcNAc...) asparagine) is linked at Asn120. The Zn(2+) site is built by His190, Asp209, Glu248, and Asp275. The cysteines at positions 324 and 328 are disulfide-linked. His357 is a Zn(2+) binding site.

The protein belongs to the peptidase M28 family. M28E subfamily. As to quaternary structure, monomer. Requires Zn(2+) as cofactor.

The protein resides in the secreted. Extracellular aminopeptidase that allows assimilation of proteinaceous substrates. The chain is Leucine aminopeptidase 1 (lap1) from Emericella nidulans (strain FGSC A4 / ATCC 38163 / CBS 112.46 / NRRL 194 / M139) (Aspergillus nidulans).